The sequence spans 317 residues: tRNA-dihydrouridine(20a/20b) synthase [NAD(P)+]-like (317 aa).

FMN-binding positions include 33–35 (PMV) and Q87. The active-site Proton donor is the C116. FMN-binding positions include K158, H186, 216-218 (NGD), and 240-241 (AR).

Belongs to the Dus family. Dus4 subfamily. FMN serves as cofactor.

The catalysed reaction is 5,6-dihydrouridine(20a) in tRNA + NADP(+) = uridine(20a) in tRNA + NADPH + H(+). It catalyses the reaction 5,6-dihydrouridine(20a) in tRNA + NAD(+) = uridine(20a) in tRNA + NADH + H(+). It carries out the reaction 5,6-dihydrouridine(20b) in tRNA + NAD(+) = uridine(20b) in tRNA + NADH + H(+). The enzyme catalyses 5,6-dihydrouridine(20b) in tRNA + NADP(+) = uridine(20b) in tRNA + NADPH + H(+). Its function is as follows. Catalyzes the synthesis of dihydrouridine, a modified base found in the D-loop of most tRNAs. This is tRNA-dihydrouridine(20a/20b) synthase [NAD(P)+]-like (DUS4L) from Homo sapiens (Human).